A 354-amino-acid chain; its full sequence is Isopentenyl-diphosphate delta-isomerase (354 aa).

6-7 contributes to the substrate binding site; sequence RK. Residues 63 to 65, Ser93, and Asn122 each bind FMN; that span reads AMT. Residue 93–95 coordinates substrate; sequence SQR. Gln160 contacts substrate. Glu161 provides a ligand contact to Mg(2+). Residues Lys192, Thr221, 273–275, and 294–295 contribute to the FMN site; these read GIR and SQ.

It belongs to the IPP isomerase type 2 family. As to quaternary structure, homooctamer. Dimer of tetramers. Requires FMN as cofactor. The cofactor is NADPH. It depends on Mg(2+) as a cofactor.

It localises to the cytoplasm. It catalyses the reaction isopentenyl diphosphate = dimethylallyl diphosphate. Involved in the biosynthesis of isoprenoids. Catalyzes the 1,3-allylic rearrangement of the homoallylic substrate isopentenyl (IPP) to its allylic isomer, dimethylallyl diphosphate (DMAPP). The polypeptide is Isopentenyl-diphosphate delta-isomerase (Pyrobaculum islandicum (strain DSM 4184 / JCM 9189 / GEO3)).